We begin with the raw amino-acid sequence, 201 residues long: Recombination protein RecR (201 aa).

The C4-type zinc finger occupies 60-75 (CKRCGSYAETEICEIC). The Toprim domain occupies 83 to 178 (HTFCVVEQPE…NVTRIAYGIT (96 aa)).

The protein belongs to the RecR family.

In terms of biological role, may play a role in DNA repair. It seems to be involved in an RecBC-independent recombinational process of DNA repair. It may act with RecF and RecO. The sequence is that of Recombination protein RecR from Leptospira interrogans serogroup Icterohaemorrhagiae serovar copenhageni (strain Fiocruz L1-130).